A 310-amino-acid polypeptide reads, in one-letter code: Probable endonuclease 4 (310 aa).

The segment at M1–V31 is disordered. Zn(2+) is bound by residues H94, H134, E173, D207, H210, H244, D257, H259, and E289.

It belongs to the AP endonuclease 2 family. Requires Zn(2+) as cofactor.

It catalyses the reaction Endonucleolytic cleavage to 5'-phosphooligonucleotide end-products.. In terms of biological role, endonuclease IV plays a role in DNA repair. It cleaves phosphodiester bonds at apurinic or apyrimidinic (AP) sites, generating a 3'-hydroxyl group and a 5'-terminal sugar phosphate. This Streptomyces avermitilis (strain ATCC 31267 / DSM 46492 / JCM 5070 / NBRC 14893 / NCIMB 12804 / NRRL 8165 / MA-4680) protein is Probable endonuclease 4.